The primary structure comprises 116 residues: Large ribosomal subunit protein bL17 (116 aa).

It belongs to the bacterial ribosomal protein bL17 family. As to quaternary structure, part of the 50S ribosomal subunit. Contacts protein L32.

The protein is Large ribosomal subunit protein bL17 of Synechococcus sp. (strain CC9902).